A 127-amino-acid chain; its full sequence is Acetylcholine receptor subunit alpha (127 aa).

Residues 1 to 127 (ADGIFAIDQF…YFIVNVIIPC (127 aa)) lie on the Extracellular side of the membrane. A disulfide bond links cysteine 33 and cysteine 47. Asparagine 46 and asparagine 94 each carry an N-linked (GlcNAc...) asparagine glycan. Cysteine 97 and cysteine 98 form a disulfide bridge.

It belongs to the ligand-gated ion channel (TC 1.A.9) family. Acetylcholine receptor (TC 1.A.9.1) subfamily. Alpha-1/CHRNA1 sub-subfamily. As to quaternary structure, one of the alpha chains that assemble within the acetylcholine receptor, a pentamer of two alpha chains, a beta, a delta, and a gamma or epsilon chains.

It localises to the postsynaptic cell membrane. Its subcellular location is the cell membrane. The catalysed reaction is K(+)(in) = K(+)(out). It catalyses the reaction Na(+)(in) = Na(+)(out). Upon acetylcholine binding, the AChR responds by an extensive change in conformation that affects all subunits and leads to opening of an ion-conducting channel across the plasma membrane. Does not bind alpha-bungarotoxin. This chain is Acetylcholine receptor subunit alpha (CHRNA1), found in Natrix tessellata (Dice snake).